The chain runs to 873 residues: Bifunctional heparan sulfate N-deacetylase/N-sulfotransferase 3 (873 aa).

The Cytoplasmic portion of the chain corresponds to 1–13 (MSFIMKPHRHFQR). The chain crosses the membrane as a helical; Signal-anchor for type II membrane protein span at residues 14-34 (TLILLATFCMVSIIISAYYLY). Over 35–873 (SGYKQESEVS…WLRQELQKVR (839 aa)) the chain is Lumenal. Residues 36–589 (GYKQESEVSG…KRHRDIWSKE (554 aa)) are heparan sulfate N-deacetylase 3. Residues Asn146, Asn226, Asn342, and Asn392 are each glycosylated (N-linked (GlcNAc...) asparagine). Residues 590–873 (KTCDRLPKFL…WLRQELQKVR (284 aa)) form a heparan sulfate N-sulfotransferase 3 region. Lys605 serves as the catalytic For sulfotransferase activity. Residue 605 to 609 (KTGTT) coordinates 3'-phosphoadenylyl sulfate. N-linked (GlcNAc...) asparagine glycosylation is present at Asn658. Ser703 serves as a coordination point for 3'-phosphoadenylyl sulfate. Asn794 carries N-linked (GlcNAc...) asparagine glycosylation. A disulfide bridge connects residues Cys809 and Cys819. Residue 824 to 828 (KGRKY) coordinates 3'-phosphoadenylyl sulfate.

This sequence belongs to the sulfotransferase 1 family. NDST subfamily. As to quaternary structure, monomer. Strongly expressed strongly in brain. Expressed at high level at embryonic day 11 compared to other stages of development. Weakly expressed in adult heart, kidney, muscle, endothelial cells and testis but not in other tissues.

The protein localises to the golgi apparatus membrane. The catalysed reaction is alpha-D-glucosaminyl-[heparan sulfate](n) + 3'-phosphoadenylyl sulfate = N-sulfo-alpha-D-glucosaminyl-[heparan sulfate](n) + adenosine 3',5'-bisphosphate + 2 H(+). It functions in the pathway glycan metabolism; heparan sulfate biosynthesis. Its pathway is glycan metabolism; heparin biosynthesis. Essential bifunctional enzyme that catalyzes both the N-deacetylation and the N-sulfation of glucosamine (GlcNAc) of the glycosaminoglycan in heparan sulfate. Modifies the GlcNAc-GlcA disaccharide repeating sugar backbone to make N-sulfated heparosan, a prerequisite substrate for later modifications in heparin biosynthesis. Has high deacetylase activity but low sulfotransferase activity. The chain is Bifunctional heparan sulfate N-deacetylase/N-sulfotransferase 3 (Ndst3) from Mus musculus (Mouse).